The chain runs to 306 residues: tRNA pseudouridine synthase B (306 aa).

Residue D43 is the Nucleophile of the active site.

It belongs to the pseudouridine synthase TruB family. Type 1 subfamily.

The catalysed reaction is uridine(55) in tRNA = pseudouridine(55) in tRNA. Its function is as follows. Responsible for synthesis of pseudouridine from uracil-55 in the psi GC loop of transfer RNAs. The chain is tRNA pseudouridine synthase B from Syntrophobacter fumaroxidans (strain DSM 10017 / MPOB).